The chain runs to 170 residues: Sec-independent protein translocase protein TatB (170 aa).

Residues 1-21 form a helical membrane-spanning segment; that stretch reads MIDFGFDKIALIGAVALIVIG. The tract at residues 69–170 is disordered; the sequence is AARNVEQSVS…VARFRPPRPL (102 aa). Polar residues predominate over residues 73 to 93; that stretch reads VEQSVSSEVNRTSSEMNQAWE. A compositionally biased stretch (basic residues) spans 128 to 137; that stretch reads HPRKNWRLKR.

This sequence belongs to the TatB family. As to quaternary structure, the Tat system comprises two distinct complexes: a TatABC complex, containing multiple copies of TatA, TatB and TatC subunits, and a separate TatA complex, containing only TatA subunits. Substrates initially bind to the TatABC complex, which probably triggers association of the separate TatA complex to form the active translocon.

The protein localises to the cell inner membrane. In terms of biological role, part of the twin-arginine translocation (Tat) system that transports large folded proteins containing a characteristic twin-arginine motif in their signal peptide across membranes. Together with TatC, TatB is part of a receptor directly interacting with Tat signal peptides. TatB may form an oligomeric binding site that transiently accommodates folded Tat precursor proteins before their translocation. In Methylibium petroleiphilum (strain ATCC BAA-1232 / LMG 22953 / PM1), this protein is Sec-independent protein translocase protein TatB.